The chain runs to 343 residues: Transcription factor MYB83 (343 aa).

Positions 1-16 (MMMRKPDITTIRDKGK) are enriched in basic and acidic residues. The interval 1-33 (MMMRKPDITTIRDKGKPNHACGGNNNKPKLRKG) is disordered. HTH myb-type domains lie at 27–79 (KPKL…INYL) and 80–134 (RPDL…KKRL). DNA-binding regions (H-T-H motif) lie at residues 55 to 79 (WSDI…INYL) and 107 to 130 (WSQI…NSTL). Positions 134–172 (LKNNSNNNTSSGSSPNNSNSNSLDPRDQHVDMGGNSTSL) are disordered. Over residues 136-155 (NNSNNNTSSGSSPNNSNSNS) the composition is skewed to low complexity.

Expressed specifically in fiber and vessel cells that are undergoing secondary wall thickening in floral stems. Expressed in vessels but not in xylary fibers in the developing secondary xylem of roots.

It localises to the nucleus. Functionally, transcription factor that acts as a molecular switch in the NAC012/SND1-mediated transcriptional network regulating secondary wall biosynthesis. Is directly activated by NAC012/SND1 and its close homologs, including NAC043/NST1, NAC066/NST2, NAC101/VND6 and NAC030/VND7. Is required for functional expression of a number of secondary wall-associated transcription factors and secondary wall biosynthetic genes involved in cellulose, xylan and lignin synthesis. Functions redundantly with MYB46 in the transcriptional regulatory cascade leading to secondary wall formation in fibers and vessels. Transcription activator that binds to the DNA consensus sequence 5'-ACC[AT]A[AC][TC]-3', designated as the secondary wall MYB-responsive element (SMRE). Regulates directly numerous transcription factors and a number of genes involved in secondary wall biosynthesis that contain SMRE elements in their promoters. The sequence is that of Transcription factor MYB83 from Arabidopsis thaliana (Mouse-ear cress).